A 1255-amino-acid polypeptide reads, in one-letter code: Period circadian protein homolog 2 (1255 aa).

The segment at 1–79 (MNGYAEFPPS…EPPDARQSPD (79 aa)) is disordered. Residues 35-56 (SSGSSGHETNENCSTGRDSQGS) are compositionally biased toward polar residues. Residues 111-120 (LIKTLKELKV) carry the Nuclear export signal 1 motif. The region spanning 181 to 248 (VTSEHIVKNA…FHSFTSPYKL (68 aa)) is the PAS 1 domain. The LXXLL signature appears at 308–312 (LCCLL). The PAS 2 domain maps to 321 to 387 (YEAPRIPPEK…MLAIHKKILQ (67 aa)). A PAC domain is found at 395–438 (YSPIRFRARNGEYITLDTSWSSFINPWSRKISFIIGRHKVRVGP). The Nuclear export signal 2 motif lies at 462 to 471 (LTEQIHRLLL). Disordered stretches follow at residues 473 to 557 (PVPH…AVPA) and 617 to 646 (RSSD…SRTG). Positions 480–484 (SGYGS) are important for protein stability. Positions 504 to 516 (NGHEDSRRRRAEI) are enriched in basic and acidic residues. The tract at residues 512 to 717 (RRAEICKNGN…ALACGLSQEK (206 aa)) is CSNK1E binding domain. 4 positions are modified to phosphoserine: Ser-527, Ser-530, Ser-533, and Ser-540. Over residues 529 to 541 (YSHESGEQKKKSV) the composition is skewed to basic and acidic residues. 6 positions are modified to phosphoserine: Ser-662, Ser-696, Ser-700, Ser-714, Ser-766, and Ser-771. 2 disordered regions span residues 764 to 838 (ERSK…DTSQ) and 931 to 985 (FPSH…QSRS). Residues 789–805 (KKTGKNRKLKSKRVKPR) carry the Nuclear localization signal motif. Basic residues predominate over residues 790 to 803 (KTGKNRKLKSKRVK). 2 stretches are compositionally biased toward polar residues: residues 829 to 838 (TAWSPSDTSQ) and 936 to 956 (TLTS…TSIP). Positions 888-1071 (QFAVQPPPFP…NEDLCSASGS (184 aa)) are interaction with PPARG. Ser-945 carries the post-translational modification Phosphoserine. A compositionally biased stretch (low complexity) spans 959 to 972 (PCACPATRATPPSA). At Ser-977 the chain carries Phosphoserine. The Nuclear export signal 3 motif lies at 989–996 (LQLNLLQL). The segment at 1018-1050 (VGADCKPGTSRDQQPKAPLTRDEPSDTQNSDAL) is disordered. Residues 1057 to 1061 (LNLLL) carry the LXXLL motif. The tract at residues 1077-1106 (LGSGSLGCDASPSGAGSSDTSHTSKYFGSI) is disordered. Positions 1090 to 1106 (GAGSSDTSHTSKYFGSI) are enriched in polar residues. Ser-1124 is modified (phosphoserine). The CRY binding domain stretch occupies residues 1155 to 1255 (SRNLEAVLKE…PLNHRIEEQT (101 aa)). Residues 1231–1255 (GLSEVSDTKEDENGSPLNHRIEEQT) are disordered.

Homodimer. Component of the circadian core oscillator, which includes the CRY proteins, CLOCK or NPAS2, BMAL1 or BMAL2, CSNK1D and/or CSNK1E, TIMELESS, and the PER proteins. Interacts with CLOCK-BMAL1 (off DNA). Interacts with BMAL2. Interacts directly with PER1 and PER3, and through a C-terminal domain, with CRY1 and CRY2. Interacts (via PAS 2 domain) with TIMELESS. Interacts with NFIL3. Different large complexes have been identified with different repressive functions. The core of PER complexes is composed of at least PER1, PER2, PER3, CRY1, CRY2, CSNK1D and/or CSNK1E. The large PER complex involved in the repression of transcriptional termination is composed of at least PER2, CDK9, DDX5, DHX9, NCBP1 and POLR2A (active). The large PER complex involved in the histone deacetylation is composed of at least HDAC1, PER2, SFPQ and SIN3A. The large PER complex involved in the histone methylation is composed of at least PER2, CBX3, TRIM28, SUV39H1 and/or SUV39H2; CBX3 mediates the formation of the complex. Interacts with SETX; the interaction inhibits termination of circadian target genes. Interacts with the nuclear receptors HNF4A, NR1D1, NR4A2, RORA, PPARA, PPARG and THRA; the interaction with at least PPARG is ligand dependent. Interacts with PML. Interacts (phosphorylated) with BTRC and FBXW11; the interactions trigger proteasomal degradation. Interacts with NONO and SFPQ. Interacts with CAVIN3. Interacts with MAGEL2. Interacts with MAP1LC3B. Interacts with HNF4A. Post-translationally, acetylated. Deacetylated by SIRT1, resulting in decreased protein stability. Deacetylated by SIRT6, preventing its degradation by the proteasome, resulting in increased protein stability. Phosphorylated by CSNK1E and CSNK1D. Phosphorylation results in PER2 protein degradation. May be dephosphorylated by PP1. In terms of processing, ubiquitinated, leading to its proteasomal degradation. Ubiquitination may be inhibited by CRY1. As to expression, widely expressed. Found in heart, brain, placenta, lung, liver, skeleatal muscle, kidney and pancreas. High levels in skeletal muscle and pancreas. Low levels in lung. Isoform 2 is expressed in keratinocytes (at protein level).

The protein resides in the nucleus. It localises to the cytoplasm. It is found in the perinuclear region. The protein localises to the nucleolus. Functionally, transcriptional repressor which forms a core component of the circadian clock. The circadian clock, an internal time-keeping system, regulates various physiological processes through the generation of approximately 24 hour circadian rhythms in gene expression, which are translated into rhythms in metabolism and behavior. It is derived from the Latin roots 'circa' (about) and 'diem' (day) and acts as an important regulator of a wide array of physiological functions including metabolism, sleep, body temperature, blood pressure, endocrine, immune, cardiovascular, and renal function. Consists of two major components: the central clock, residing in the suprachiasmatic nucleus (SCN) of the brain, and the peripheral clocks that are present in nearly every tissue and organ system. Both the central and peripheral clocks can be reset by environmental cues, also known as Zeitgebers (German for 'timegivers'). The predominant Zeitgeber for the central clock is light, which is sensed by retina and signals directly to the SCN. The central clock entrains the peripheral clocks through neuronal and hormonal signals, body temperature and feeding-related cues, aligning all clocks with the external light/dark cycle. Circadian rhythms allow an organism to achieve temporal homeostasis with its environment at the molecular level by regulating gene expression to create a peak of protein expression once every 24 hours to control when a particular physiological process is most active with respect to the solar day. Transcription and translation of core clock components (CLOCK, NPAS2, BMAL1, BMAL2, PER1, PER2, PER3, CRY1 and CRY2) plays a critical role in rhythm generation, whereas delays imposed by post-translational modifications (PTMs) are important for determining the period (tau) of the rhythms (tau refers to the period of a rhythm and is the length, in time, of one complete cycle). A diurnal rhythm is synchronized with the day/night cycle, while the ultradian and infradian rhythms have a period shorter and longer than 24 hours, respectively. Disruptions in the circadian rhythms contribute to the pathology of cardiovascular diseases, cancer, metabolic syndrome and aging. A transcription/translation feedback loop (TTFL) forms the core of the molecular circadian clock mechanism. Transcription factors, CLOCK or NPAS2 and BMAL1 or BMAL2, form the positive limb of the feedback loop, act in the form of a heterodimer and activate the transcription of core clock genes and clock-controlled genes (involved in key metabolic processes), harboring E-box elements (5'-CACGTG-3') within their promoters. The core clock genes: PER1/2/3 and CRY1/2 which are transcriptional repressors form the negative limb of the feedback loop and interact with the CLOCK|NPAS2-BMAL1|BMAL2 heterodimer inhibiting its activity and thereby negatively regulating their own expression. This heterodimer also activates nuclear receptors NR1D1/2 and RORA/B/G, which form a second feedback loop and which activate and repress BMAL1 transcription, respectively. PER1 and PER2 proteins transport CRY1 and CRY2 into the nucleus with appropriate circadian timing, but also contribute directly to repression of clock-controlled target genes through interaction with several classes of RNA-binding proteins, helicases and others transcriptional repressors. PER appears to regulate circadian control of transcription by at least three different modes. First, interacts directly with the CLOCK-BMAL1 at the tail end of the nascent transcript peak to recruit complexes containing the SIN3-HDAC that remodel chromatin to repress transcription. Second, brings H3K9 methyltransferases such as SUV39H1 and SUV39H2 to the E-box elements of the circadian target genes, like PER2 itself or PER1. The recruitment of each repressive modifier to the DNA seems to be very precisely temporally orchestrated by the large PER complex, the deacetylases acting before than the methyltransferases. Additionally, large PER complexes are also recruited to the target genes 3' termination site through interactions with RNA-binding proteins and helicases that may play a role in transcription termination to regulate transcription independently of CLOCK-BMAL1 interactions. Recruitment of large PER complexes to the elongating polymerase at PER and CRY termination sites inhibited SETX action, impeding RNA polymerase II release and thereby repressing transcriptional reinitiation. May propagate clock information to metabolic pathways via the interaction with nuclear receptors. Coactivator of PPARA and corepressor of NR1D1, binds rhythmically at the promoter of nuclear receptors target genes like BMAL1 or G6PC1. Directly and specifically represses PPARG proadipogenic activity by blocking PPARG recruitment to target promoters and thereby inhibiting transcriptional activation. Required for fatty acid and lipid metabolism, is involved as well in the regulation of circulating insulin levels. Plays an important role in the maintenance of cardiovascular functions through the regulation of NO and vasodilatatory prostaglandins production in aortas. Controls circadian glutamate uptake in synaptic vesicles through the regulation of VGLUT1 expression. May also be involved in the regulation of inflammatory processes. Represses the CLOCK-BMAL1 induced transcription of BHLHE40/DEC1 and ATF4. Negatively regulates the formation of the TIMELESS-CRY1 complex by competing with TIMELESS for binding to CRY1. The chain is Period circadian protein homolog 2 (PER2) from Homo sapiens (Human).